A 355-amino-acid polypeptide reads, in one-letter code: Transcription factor TGAL9 (355 aa).

Disordered regions lie at residues 83 to 104 and 118 to 188; these read FPSQ…MAAI and GSSK…DAKT. The segment covering 118–134 has biased composition (low complexity); the sequence is GSSKRPPAAAAAGGQPS. Residues 135-144 show a composition bias toward polar residues; the sequence is RLNNPADQPS. Composition is skewed to basic and acidic residues over residues 148-159 and 176-188; these read KDGKAAVVKKEG and SEHE…DAKT. Residues 185 to 230 form the bZIP domain; the sequence is DAKTLRRLAQNREAARKSRLRKKAYIQNLETSRIRLSQLEQELVQR. A basic motif region spans residues 187–207; it reads KTLRRLAQNREAARKSRLRKK. A leucine-zipper region spans residues 213 to 227; that stretch reads LETSRIRLSQLEQEL. One can recognise a DOG1 domain in the interval 254 to 355; it reads AAWFDGEYAR…RPSELIKVST (102 aa).

The protein belongs to the bZIP family. As to quaternary structure, interacts with NPR5/NH4, NH5.1 and NH5.2.

It is found in the nucleus. Functionally, transcriptional regulator involved in defense response. The chain is Transcription factor TGAL9 from Oryza sativa subsp. japonica (Rice).